Here is a 209-residue protein sequence, read N- to C-terminus: Ribosomal RNA large subunit methyltransferase E (209 aa).

The S-adenosyl-L-methionine site is built by glycine 63, tryptophan 65, aspartate 83, aspartate 99, and aspartate 124. The active-site Proton acceptor is the lysine 164.

Belongs to the class I-like SAM-binding methyltransferase superfamily. RNA methyltransferase RlmE family.

Its subcellular location is the cytoplasm. It catalyses the reaction uridine(2552) in 23S rRNA + S-adenosyl-L-methionine = 2'-O-methyluridine(2552) in 23S rRNA + S-adenosyl-L-homocysteine + H(+). In terms of biological role, specifically methylates the uridine in position 2552 of 23S rRNA at the 2'-O position of the ribose in the fully assembled 50S ribosomal subunit. This Shewanella halifaxensis (strain HAW-EB4) protein is Ribosomal RNA large subunit methyltransferase E.